Consider the following 546-residue polypeptide: Chaperonin GroEL (546 aa).

ATP-binding positions include Thr-29–Pro-32, Lys-50, Asp-86–Thr-90, Gly-414, Asn-477–Ala-479, and Asp-493.

The protein belongs to the chaperonin (HSP60) family. As to quaternary structure, forms a cylinder of 14 subunits composed of two heptameric rings stacked back-to-back. Interacts with the co-chaperonin GroES.

Its subcellular location is the cytoplasm. The enzyme catalyses ATP + H2O + a folded polypeptide = ADP + phosphate + an unfolded polypeptide.. Together with its co-chaperonin GroES, plays an essential role in assisting protein folding. The GroEL-GroES system forms a nano-cage that allows encapsulation of the non-native substrate proteins and provides a physical environment optimized to promote and accelerate protein folding. The protein is Chaperonin GroEL of Geobacter metallireducens (strain ATCC 53774 / DSM 7210 / GS-15).